A 626-amino-acid chain; its full sequence is Serine/threonine-protein kinase PknH (626 aa).

The Cytoplasmic segment spans residues 1–403; the sequence is MSDAQDSRVG…QTPRKTNPWP (403 aa). The 261-residue stretch at 16 to 276 folds into the Protein kinase domain; sequence YHLKRLLGRG…DLALAAHEAL (261 aa). ATP contacts are provided by residues 22–30 and Lys45; that span reads LGRGGMGEV. Asp139 functions as the Proton acceptor in the catalytic mechanism. Phosphothreonine is present on Thr170. Residues 292 to 396 form a disordered region; it reads QESTLPAPPK…GGPSPWAQTP (105 aa). Composition is skewed to pro residues over residues 297-308 and 316-342; these read PAPPKPVPPPTM and RQPP…PAQP. Positions 343–355 are enriched in low complexity; that stretch reads GPAGQRPGPTGQP. A helical transmembrane segment spans residues 404–424; that stretch reads LVAGAAAVVLVLVLGAIGIWI. Residues 425-626 lie on the Extracellular side of the membrane; sequence AIRPKPVQPP…AKIVDKVNKE (202 aa). Disulfide bonds link Cys482–Cys545 and Cys587–Cys604.

It belongs to the protein kinase superfamily. Ser/Thr protein kinase family. The cofactor is a divalent metal cation. In terms of processing, autophosphorylated on threonine and serine residues. Dephosphorylated by PstP.

The protein localises to the cell membrane. The catalysed reaction is L-seryl-[protein] + ATP = O-phospho-L-seryl-[protein] + ADP + H(+). The enzyme catalyses L-threonyl-[protein] + ATP = O-phospho-L-threonyl-[protein] + ADP + H(+). Inhibited by the kinase inhibitors staurosporine and H-7. Functionally, may regulate bacterial growth in response to external signals to facilitate adaptation to the host environment. In vitro, phosphorylates several substrates such as EmbR, DevR (DosR), DacB1 and Rv0681. This Mycobacterium tuberculosis (strain ATCC 25618 / H37Rv) protein is Serine/threonine-protein kinase PknH (pknH).